The sequence spans 208 residues: MAKVLYITAHPFNELVSNSMAAGKAFIETYQQQHPDDEVKHIDLFETYIPVIDKDVLTGWGKMSNGETLTDDEQMKVSRLSDILEEFLSADKYVFVTPMWNLSFPPVVKAYIDAISIAGKTFKYSAEGPQGLLTDKKVLHIQSRGGYYTEGPAADFEMGDRYLRTIMTFLGVPSYETIIIEGHNAEPHKTEEIKATSINNAEKLATIF.

FMN-binding positions include S17–S19, M99–L102, and S143–G146.

The protein belongs to the azoreductase type 1 family. In terms of assembly, homodimer. It depends on FMN as a cofactor.

The enzyme catalyses 2 a quinone + NADH + H(+) = 2 a 1,4-benzosemiquinone + NAD(+). It carries out the reaction N,N-dimethyl-1,4-phenylenediamine + anthranilate + 2 NAD(+) = 2-(4-dimethylaminophenyl)diazenylbenzoate + 2 NADH + 2 H(+). Quinone reductase that provides resistance to thiol-specific stress caused by electrophilic quinones. Its function is as follows. Also exhibits azoreductase activity. Catalyzes the reductive cleavage of the azo bond in aromatic azo compounds to the corresponding amines. In Staphylococcus aureus (strain MSSA476), this protein is FMN-dependent NADH:quinone oxidoreductase.